A 620-amino-acid chain; its full sequence is 1-deoxy-D-xylulose-5-phosphate synthase (620 aa).

Thiamine diphosphate contacts are provided by residues His80 and Gly121 to Ser123. Mg(2+) is bound at residue Asp152. Residues Gly153–Ala154, Asn181, Tyr288, and Glu370 each bind thiamine diphosphate. Residue Asn181 participates in Mg(2+) binding.

It belongs to the transketolase family. DXPS subfamily. In terms of assembly, homodimer. It depends on Mg(2+) as a cofactor. Thiamine diphosphate serves as cofactor.

It catalyses the reaction D-glyceraldehyde 3-phosphate + pyruvate + H(+) = 1-deoxy-D-xylulose 5-phosphate + CO2. It participates in metabolic intermediate biosynthesis; 1-deoxy-D-xylulose 5-phosphate biosynthesis; 1-deoxy-D-xylulose 5-phosphate from D-glyceraldehyde 3-phosphate and pyruvate: step 1/1. Its function is as follows. Catalyzes the acyloin condensation reaction between C atoms 2 and 3 of pyruvate and glyceraldehyde 3-phosphate to yield 1-deoxy-D-xylulose-5-phosphate (DXP). The sequence is that of 1-deoxy-D-xylulose-5-phosphate synthase from Escherichia coli (strain SMS-3-5 / SECEC).